The sequence spans 511 residues: Exodeoxyribonuclease 7 large subunit (511 aa).

This sequence belongs to the XseA family. In terms of assembly, heterooligomer composed of large and small subunits.

It is found in the cytoplasm. The enzyme catalyses Exonucleolytic cleavage in either 5'- to 3'- or 3'- to 5'-direction to yield nucleoside 5'-phosphates.. In terms of biological role, bidirectionally degrades single-stranded DNA into large acid-insoluble oligonucleotides, which are then degraded further into small acid-soluble oligonucleotides. The sequence is that of Exodeoxyribonuclease 7 large subunit from Brucella melitensis biotype 2 (strain ATCC 23457).